The sequence spans 158 residues: Ribosome maturation factor RimP (158 aa).

This sequence belongs to the RimP family.

The protein localises to the cytoplasm. In terms of biological role, required for maturation of 30S ribosomal subunits. The protein is Ribosome maturation factor RimP of Lactobacillus delbrueckii subsp. bulgaricus (strain ATCC 11842 / DSM 20081 / BCRC 10696 / JCM 1002 / NBRC 13953 / NCIMB 11778 / NCTC 12712 / WDCM 00102 / Lb 14).